The primary structure comprises 162 residues: Transcription antitermination protein NusB (162 aa).

It belongs to the NusB family.

Its function is as follows. Involved in transcription antitermination. Required for transcription of ribosomal RNA (rRNA) genes. Binds specifically to the boxA antiterminator sequence of the ribosomal RNA (rrn) operons. The protein is Transcription antitermination protein NusB of Mycobacterium sp. (strain JLS).